Here is a 1470-residue protein sequence, read N- to C-terminus: Roundabout homolog 2 (1470 aa).

The signal sequence occupies residues 1–21; that stretch reads MNPLMFTLLLLFGFLCIQIDG. At 22–863 the chain is on the extracellular side; that stretch reads SRLRQEDFPP…EQITDVVKQP (842 aa). Ig-like C2-type domains follow at residues 31-127, 133-220, 225-309, 318-413, and 422-508; these read PRIV…ASLE, DDFR…AELT, PTFL…ATLT, PQFV…LEVT, and PIIL…AVLD. Residues Cys-52 and Cys-110 are joined by a disulfide bond. An N-linked (GlcNAc...) asparagine glycan is attached at Asn-123. Disulfide bonds link Cys-154/Cys-203, Cys-246/Cys-293, and Cys-339/Cys-395. Residue Asn-430 is glycosylated (N-linked (GlcNAc...) asparagine). Cys-443 and Cys-492 are oxidised to a cystine. 3 consecutive Fibronectin type-III domains span residues 528 to 622, 641 to 739, and 743 to 840; these read PPSK…TQDI, VVVR…TEEA, and PPQS…IGGR. N-linked (GlcNAc...) asparagine glycosylation is found at Asn-756, Asn-786, Asn-793, and Asn-849. A helical membrane pass occupies residues 864-884; it reads AFIAGIGGACWVILMGFSIWL. Residues 885–1470 lie on the Cytoplasmic side of the membrane; it reads YWRRKKRKGL…GSNSQGQFTE (586 aa). 4 disordered regions span residues 1036 to 1089, 1129 to 1159, 1190 to 1371, and 1383 to 1470; these read GFGY…LPGT, EDRV…LTPS, IQSN…DCPA, and DWIN…QFTE. Over residues 1144–1158 the composition is skewed to polar residues; sequence PAISFGQQSTATLTP. Position 1157 is a phosphothreonine (Thr-1157). Position 1159 is a phosphoserine (Ser-1159). A compositionally biased stretch (pro residues) spans 1194-1203; it reads TPPPQPPAPP. A compositionally biased stretch (acidic residues) spans 1215–1231; that stretch reads LETDVPDEDADDEEEPL. Polar residues predominate over residues 1243 to 1288; that stretch reads TPGSSMDNLDSSVTGKAFSSSQRQRPTSPFSTDSNTSAAQNQSQRP. Residues 1315–1325 show a composition bias toward pro residues; the sequence is DLPPPPDPPPG. The span at 1328 to 1343 shows a compositional bias: polar residues; that stretch reads LRQQIGLSQHSGNVEN. A compositionally biased stretch (low complexity) spans 1413-1437; the sequence is SKPSFPSPGGHSSSGTSSSKGSTGP. A compositionally biased stretch (polar residues) spans 1461 to 1470; that stretch reads GSNSQGQFTE.

Belongs to the immunoglobulin superfamily. ROBO family. As to quaternary structure, interacts with SLIT2. Expressed in embryonal spinal cord.

It localises to the membrane. In terms of biological role, receptor for SLIT2, and probably SLIT1, which are thought to act as molecular guidance cue in cellular migration, including axonal navigation at the ventral midline of the neural tube and projection of axons to different regions during neuronal development. The protein is Roundabout homolog 2 (Robo2) of Mus musculus (Mouse).